A 511-amino-acid polypeptide reads, in one-letter code: Voltage-gated potassium channel KCNC1 (511 aa).

Residues 1-190 are Cytoplasmic-facing; it reads MGQGDESERI…EDPYSSRYAR (190 aa). Residue S44 is modified to Phosphoserine. The Zn(2+) site is built by H77, C83, C104, and C105. Residues 121 to 147 are disordered; sequence SFGGAPLDNSADDADADGPGDSGDGED. Residues S130, S142, S158, and S160 each carry the phosphoserine modification. Over residues 130-147 the composition is skewed to acidic residues; the sequence is SADDADADGPGDSGDGED. The helical transmembrane segment at 191–209 threads the bilayer; sequence YVAFASLFFILVSITTFCL. Residues N220 and N229 are each glycosylated (N-linked (GlcNAc...) asparagine). The chain crosses the membrane as a helical span at residues 248-267; that stretch reads IEGVCVVWFTFEFLMRVVFC. Over 268 to 276 the chain is Cytoplasmic; sequence PNKVEFIKN. A helical membrane pass occupies residues 277-295; it reads SLNIIDFVAILPFYLEVGL. Residues 309-331 form a helical; Voltage-sensor membrane-spanning segment; it reads FLRVVRFVRILRIFKLTRHFVGL. Over 332–344 the chain is Cytoplasmic; the sequence is RVLGHTLRASTNE. A helical membrane pass occupies residues 345 to 366; sequence FLLLIIFLALGVLIFATMIYYA. 4 residues coordinate K(+): T400, L401, G402, and Y403. The Selectivity filter signature appears at 400 to 405; the sequence is TLGYGD. The chain crosses the membrane as a helical span at residues 415 to 436; sequence LVGALCALAGVLTIAMPVPVIV. Topologically, residues 437–511 are cytoplasmic; the sequence is NNFGMYYSLA…GRKPLRGMSI (75 aa). Residue S474 is modified to Phosphoserine. Phosphothreonine is present on T483.

Belongs to the potassium channel family. C (Shaw) (TC 1.A.1.2) subfamily. Kv3.1/KCNC1 sub-subfamily. Homotetramer. Homomultimer. Heteromultimer with KCNG3, KCNG4 and KCNV2. Heteromultimer with KCNC2. Heterotetramer with KCNC3. Interacts with the ancillary subunits KCNE1 and KCNE2; the interaction modulates channel activity. N-glycosylated; contains sialylated glycans. In terms of tissue distribution, detected in cerebellum. Detected in brain (at protein level). Detected in brain.

Its subcellular location is the cell membrane. It localises to the cell projection. The protein localises to the axon. It is found in the presynaptic cell membrane. It carries out the reaction K(+)(in) = K(+)(out). Voltage-gated potassium channel that opens in response to the voltage difference across the membrane and through which potassium ions pass in accordance with their electrochemical gradient. The mechanism is time-dependent and inactivation is slow. Plays an important role in the rapid repolarization of fast-firing brain neurons. Can form functional homotetrameric channels and heterotetrameric channels that contain variable proportions of KCNC2, and possibly other family members as well. Contributes to fire sustained trains of very brief action potentials at high frequency in pallidal neurons. The chain is Voltage-gated potassium channel KCNC1 from Mus musculus (Mouse).